The primary structure comprises 989 residues: Cellulose synthase A catalytic subunit 4 [UDP-forming] (989 aa).

Topologically, residues 1 to 184 are cytoplasmic; sequence MMESGVPPCA…SRIIPISKNK (184 aa). Zn(2+) is bound by residues Cys-9, Cys-12, Cys-20, Cys-23, Cys-28, Cys-31, Cys-43, and Cys-46. The RING-type; degenerate zinc finger occupies 9–47; that stretch reads CAACGDDAHAACRACSYALCKACLDEDAAEGRTTCARCG. Basic residues predominate over residues 138–149; it reads KKEKKASAKKAA. The segment at 138–158 is disordered; the sequence is KKEKKASAKKAAAKAQAPPVE. Residues 185 to 205 traverse the membrane as a helical segment; the sequence is LTPYRAVIIMRLVVLGLFFHY. Over 206–213 the chain is Extracellular; sequence RITNPVYS. Residues 214–234 traverse the membrane as a helical segment; sequence AFGLWMTSVICEIWFGFSWIL. The Cytoplasmic portion of the chain corresponds to 235 to 772; the sequence is DQFPKWCPIN…INTIVYPFTS (538 aa). UDP-alpha-D-glucose-binding residues include Ser-272, Lys-278, Glu-279, and Asp-308. Asp-308 is an active-site residue. Residues 362–389 adopt a coiled-coil conformation; it reads VKERRAMKRDYEEYKVRINALVAKAQKT. Lys-449 is a binding site for UDP-alpha-D-glucose. Mn(2+)-binding residues include Lys-450 and Asp-474. Asp-688 is an active-site residue. The helical transmembrane segment at 773–793 threads the bilayer; it reads LPLIAYCCLPAICLLTGKFII. At 794 to 798 the chain is on the extracellular side; sequence PTLSN. A helical membrane pass occupies residues 799–819; the sequence is AATIWFLGLFISIIVTSVLEL. The Cytoplasmic portion of the chain corresponds to 820–835; sequence RWSGIGIEDWWRNEQF. A helical transmembrane segment spans residues 836 to 856; the sequence is WVIGGVSAHLFAVFQGILKMI. The Extracellular portion of the chain corresponds to 857 to 884; it reads AGLDTNFTVTAKATDDTEFGELYVFKWT. A glycan (N-linked (GlcNAc...) asparagine) is linked at Asn-862. A helical membrane pass occupies residues 885–905; the sequence is TVLIPPTSILVLNLVGVVAGF. Residues 906 to 916 are Cytoplasmic-facing; that stretch reads SDALNSGYESW. The helical transmembrane segment at 917-937 threads the bilayer; it reads GPLFGKVFFAMWVIMHLYPFL. Topologically, residues 938 to 946 are extracellular; sequence KGLMGRQNR. A helical membrane pass occupies residues 947–967; that stretch reads TPTIVVLWSVLLASVFSLLWV. The Cytoplasmic segment spans residues 968-989; the sequence is KIDPFIGSSETTTTNSCANFDC.

It belongs to the glycosyltransferase 2 family. Plant cellulose synthase subfamily. It depends on Mn(2+) as a cofactor. Zn(2+) is required as a cofactor.

It is found in the cell membrane. It carries out the reaction [(1-&gt;4)-beta-D-glucosyl](n) + UDP-alpha-D-glucose = [(1-&gt;4)-beta-D-glucosyl](n+1) + UDP + H(+). The protein operates within glycan metabolism; plant cellulose biosynthesis. Functionally, catalytic subunit of cellulose synthase terminal complexes ('rosettes'), required for beta-1,4-glucan microfibril crystallization, a major mechanism of the cell wall formation. Involved in the secondary cell wall formation. In Oryza sativa subsp. indica (Rice), this protein is Cellulose synthase A catalytic subunit 4 [UDP-forming] (CESA4).